The primary structure comprises 210 residues: Tetraspanin-31 (210 aa).

Residues 1–12 lie on the Cytoplasmic side of the membrane; that stretch reads MVCGGFACSRNA. Residues 13–33 traverse the membrane as a helical segment; that stretch reads LCALNVVYMLVGFLLIGVAAW. Topologically, residues 34 to 44 are extracellular; the sequence is GKGLGVVSSIH. The helical transmembrane segment at 45–65 threads the bilayer; that stretch reads IIGGVIAVGVFLLLIAVAGLV. Topologically, residues 66 to 72 are cytoplasmic; that stretch reads GAANHHQ. The helical transmembrane segment at 73 to 93 threads the bilayer; that stretch reads VLLFFYMIILGLVFIFQFGIS. The Extracellular portion of the chain corresponds to 94 to 173; the sequence is CSCLAINRNT…FLKHSDKALK (80 aa). Asparagine 109, asparagine 117, and asparagine 134 each carry an N-linked (GlcNAc...) asparagine glycan. Residues 174 to 194 traverse the membrane as a helical segment; that stretch reads ILGGVGLFFSFTEILGVWLAM. Residues 195 to 210 are Cytoplasmic-facing; the sequence is RFRNQKDPRANPSAFL.

Belongs to the tetraspanin (TM4SF) family.

The protein localises to the membrane. The protein is Tetraspanin-31 (Tspan31) of Mus musculus (Mouse).